The sequence spans 617 residues: D-glucuronyl C5-epimerase (617 aa).

At 1 to 11 (MRCLAARVNYK) the chain is on the cytoplasmic side. A helical; Signal-anchor for type II membrane protein transmembrane segment spans residues 12–28 (TLIIICALFTLVTVLLW). Residues 29–617 (NKCSSDKAIQ…YLKGSRAKHN (589 aa)) are Lumenal-facing. Substrate is bound by residues Tyr-179, 184 to 186 (RDR), Gln-201, Tyr-209, Gln-212, and Gln-215. Ca(2+) contacts are provided by Thr-237, Glu-239, Thr-268, Asn-269, and Asp-392. Residues 429–432 (KLGE), 499–500 (EY), Asn-510, Tyr-514, Tyr-560, Arg-563, and 572–581 (NLARWDYHTT) each bind substrate.

The protein belongs to the D-glucuronyl C5-epimerase family. As to quaternary structure, homodimer. Interacts with HS2ST1.

The protein localises to the golgi apparatus membrane. It catalyses the reaction [heparosan-N-sulfate](n) = [heparan-N-sulfate](n). The protein operates within glycan metabolism; heparan sulfate biosynthesis. It participates in glycan metabolism; heparin biosynthesis. Functionally, converts D-glucuronic acid residues adjacent to N-sulfate sugar residues to L-iduronic acid residues, both in maturing heparan sulfate (HS) and heparin chains. This is important for further modifications that determine the specificity of interactions between these glycosaminoglycans and proteins. The protein is D-glucuronyl C5-epimerase (GLCE) of Bos taurus (Bovine).